Consider the following 201-residue polypeptide: Mediator of RNA polymerase II transcription subunit 19 (201 aa).

A disordered region spans residues 166–201; that stretch reads GTGKSNAKKRKNRSNGSSMATPNSEMQDDVKRRRLE.

Belongs to the Mediator complex subunit 19 family. In terms of assembly, component of the Mediator complex.

Its subcellular location is the nucleus. In terms of biological role, component of the Mediator complex, a coactivator involved in the regulated transcription of nearly all RNA polymerase II-dependent genes. Mediator functions as a bridge to convey information from gene-specific regulatory proteins to the basal RNA polymerase II transcription machinery. Mediator is recruited to promoters by direct interactions with regulatory proteins and serves as a scaffold for the assembly of a functional preinitiation complex with RNA polymerase II and the general transcription factors. The protein is Mediator of RNA polymerase II transcription subunit 19 (ROX3) of Candida glabrata (strain ATCC 2001 / BCRC 20586 / JCM 3761 / NBRC 0622 / NRRL Y-65 / CBS 138) (Yeast).